We begin with the raw amino-acid sequence, 421 residues long: Tubulin gamma-3 chain (421 aa).

A GTP-binding site is contributed by 94–100 (AGGTGSG).

It belongs to the tubulin family.

It localises to the cytoplasm. Its subcellular location is the cytoskeleton. It is found in the microtubule organizing center. Functionally, tubulin is the major constituent of microtubules. The gamma chain is found at microtubule organizing centers (MTOC) such as the spindle poles, suggesting that it is involved in the minus-end nucleation of microtubule assembly. The polypeptide is Tubulin gamma-3 chain (TUBG3) (Zea mays (Maize)).